The following is a 131-amino-acid chain: Protein E11 homolog (131 aa).

It belongs to the chordopoxvirinae E11 family.

The protein resides in the virion. The chain is Protein E11 homolog from Fowlpox virus (strain NVSL) (FPV).